The chain runs to 490 residues: ATP synthase subunit beta (490 aa).

173–180 provides a ligand contact to ATP; sequence GGAGVGKT.

Belongs to the ATPase alpha/beta chains family. In terms of assembly, F-type ATPases have 2 components, CF(1) - the catalytic core - and CF(0) - the membrane proton channel. CF(1) has five subunits: alpha(3), beta(3), gamma(1), delta(1), epsilon(1). CF(0) has three main subunits: a(1), b(2) and c(9-12). The alpha and beta chains form an alternating ring which encloses part of the gamma chain. CF(1) is attached to CF(0) by a central stalk formed by the gamma and epsilon chains, while a peripheral stalk is formed by the delta and b chains.

The protein localises to the cell membrane. The catalysed reaction is ATP + H2O + 4 H(+)(in) = ADP + phosphate + 5 H(+)(out). Functionally, produces ATP from ADP in the presence of a proton gradient across the membrane. The catalytic sites are hosted primarily by the beta subunits. This Bifidobacterium longum (strain DJO10A) protein is ATP synthase subunit beta.